The chain runs to 126 residues: Protein Wnt-7(II) (126 aa).

Serine 1 carries the O-palmitoleoyl serine; by PORCN lipid modification. Cysteine 92 and cysteine 107 are oxidised to a cystine. Residue asparagine 93 is glycosylated (N-linked (GlcNAc...) asparagine).

It belongs to the Wnt family. Palmitoleoylation is required for efficient binding to frizzled receptors. Depalmitoleoylation leads to Wnt signaling pathway inhibition.

It localises to the secreted. It is found in the extracellular space. The protein resides in the extracellular matrix. In terms of biological role, ligand for members of the frizzled family of seven transmembrane receptors. Probable developmental protein. May be a signaling molecule which affects the development of discrete regions of tissues. Is likely to signal over only few cell diameters. This is Protein Wnt-7(II) (WNT-7(II)) from Eptatretus stoutii (Pacific hagfish).